The following is a 141-amino-acid chain: Hemoglobin subunit zeta (141 aa).

Ser-1 bears the N-acetylserine mark. In terms of domain architecture, Globin spans 1–141; the sequence is SLTKAERTII…VSGVLTEKYR (141 aa). Thr-28 is subject to Phosphothreonine. Ser-52 carries the phosphoserine modification. His-58 contributes to the heme b binding site. Residue Ser-72 is modified to Phosphoserine. Position 87 (His-87) interacts with heme b.

The protein belongs to the globin family. In terms of assembly, heterotetramer of two zeta chains and two epsilon chains.

In terms of biological role, the zeta chain is an alpha-type chain of mammalian embryonic hemoglobin. The chain is Hemoglobin subunit zeta from Sus scrofa (Pig).